The chain runs to 306 residues: tRNA-cytidine(32) 2-sulfurtransferase (306 aa).

Residues Ser-44–Ser-49 carry the PP-loop motif motif. 3 residues coordinate [4Fe-4S] cluster: Cys-119, Cys-122, and Cys-210.

Belongs to the TtcA family. Homodimer. The cofactor is Mg(2+). It depends on [4Fe-4S] cluster as a cofactor.

It is found in the cytoplasm. It carries out the reaction cytidine(32) in tRNA + S-sulfanyl-L-cysteinyl-[cysteine desulfurase] + AH2 + ATP = 2-thiocytidine(32) in tRNA + L-cysteinyl-[cysteine desulfurase] + A + AMP + diphosphate + H(+). It participates in tRNA modification. Its function is as follows. Catalyzes the ATP-dependent 2-thiolation of cytidine in position 32 of tRNA, to form 2-thiocytidine (s(2)C32). The sulfur atoms are provided by the cysteine/cysteine desulfurase (IscS) system. In Photorhabdus laumondii subsp. laumondii (strain DSM 15139 / CIP 105565 / TT01) (Photorhabdus luminescens subsp. laumondii), this protein is tRNA-cytidine(32) 2-sulfurtransferase.